Reading from the N-terminus, the 192-residue chain is MSQTQSLAVKTRAGLGKGACRKLRADDMVPGVYYDAKGVNVPVMVEHLPLQKLYSKIASSHVFDLQIEGETKPALVWKVEHHPTKPRITHVDFYGVDLTKEIQVRVPVEVVGKSKGQVKGGQLEIHREFIEVLCLPLVIPDKIVLDITNVDINESILIADVVLPEGVKAVYDNNYAVIGVLASAAEAAGEGA.

It belongs to the bacterial ribosomal protein bL25 family. CTC subfamily. Part of the 50S ribosomal subunit; part of the 5S rRNA/L5/L18/L25 subcomplex. Contacts the 5S rRNA. Binds to the 5S rRNA independently of L5 and L18.

Its function is as follows. This is one of the proteins that binds to the 5S RNA in the ribosome where it forms part of the central protuberance. The protein is Large ribosomal subunit protein bL25 of Solidesulfovibrio magneticus (strain ATCC 700980 / DSM 13731 / RS-1) (Desulfovibrio magneticus).